Reading from the N-terminus, the 95-residue chain is Small ribosomal subunit protein uS19 (95 aa).

It belongs to the universal ribosomal protein uS19 family.

Protein S19 forms a complex with S13 that binds strongly to the 16S ribosomal RNA. This chain is Small ribosomal subunit protein uS19, found in Clostridium kluyveri (strain NBRC 12016).